The following is a 407-amino-acid chain: MTNPTSDGQPRGRLRVLVLGSTGSIGTQALQVIAANPDRFEVVGLAAGGANLDTLLRQRAETGVTNVAVADEHAARRAGDIPFCGPEAATRLVEETEADVVLNALVGALGLRPTLAALESGARLALANKESLIAGGPLVLAAAAPGQIVPVDSEHSALAQCLRGGTGDEVAKLVLTASGGPFRGWTAEELEHVTPEQAGAHPTWSMGPMNTLNSASLVNKGLELIETHLLFGIPYDRIEVVVHPQSIVHSMVTFVDGSTLAQASPPDMRLPISLALGWPHRVPGAAACCDFSTASSWEFEPLDNEVFPAVELARHAGQAGGCMTAIYNAANEEAAAAFLAGRVSFGAIVETIADVLHAADQWAPKFSETPANVDDVLDAQRWARQQAQRAVAQARPATVSAKTPGVV.

Positions 22, 23, 24, 25, 48, 51, and 128 each coordinate NADPH. A 1-deoxy-D-xylulose 5-phosphate-binding site is contributed by lysine 129. An NADPH-binding site is contributed by glutamate 130. Aspartate 152 is a binding site for Mn(2+). Residues serine 153, glutamate 154, serine 178, and histidine 201 each coordinate 1-deoxy-D-xylulose 5-phosphate. Residue glutamate 154 coordinates Mn(2+). Glycine 207 is an NADPH binding site. Residues serine 214, asparagine 219, lysine 220, and glutamate 223 each coordinate 1-deoxy-D-xylulose 5-phosphate. Glutamate 223 contributes to the Mn(2+) binding site.

It belongs to the DXR family. Requires Mg(2+) as cofactor. It depends on Mn(2+) as a cofactor.

It catalyses the reaction 2-C-methyl-D-erythritol 4-phosphate + NADP(+) = 1-deoxy-D-xylulose 5-phosphate + NADPH + H(+). The protein operates within isoprenoid biosynthesis; isopentenyl diphosphate biosynthesis via DXP pathway; isopentenyl diphosphate from 1-deoxy-D-xylulose 5-phosphate: step 1/6. Its function is as follows. Catalyzes the NADPH-dependent rearrangement and reduction of 1-deoxy-D-xylulose-5-phosphate (DXP) to 2-C-methyl-D-erythritol 4-phosphate (MEP). The sequence is that of 1-deoxy-D-xylulose 5-phosphate reductoisomerase from Mycobacterium avium (strain 104).